Reading from the N-terminus, the 435-residue chain is Serine--tRNA ligase (435 aa).

234-236 (TAE) contributes to the L-serine binding site. 265-267 (RRE) is an ATP binding site. Residue Glu288 participates in L-serine binding. 352-355 (EISS) provides a ligand contact to ATP. Ser388 lines the L-serine pocket.

This sequence belongs to the class-II aminoacyl-tRNA synthetase family. Type-1 seryl-tRNA synthetase subfamily. Homodimer. The tRNA molecule binds across the dimer.

The protein localises to the cytoplasm. It carries out the reaction tRNA(Ser) + L-serine + ATP = L-seryl-tRNA(Ser) + AMP + diphosphate + H(+). The catalysed reaction is tRNA(Sec) + L-serine + ATP = L-seryl-tRNA(Sec) + AMP + diphosphate + H(+). Its pathway is aminoacyl-tRNA biosynthesis; selenocysteinyl-tRNA(Sec) biosynthesis; L-seryl-tRNA(Sec) from L-serine and tRNA(Sec): step 1/1. Its function is as follows. Catalyzes the attachment of serine to tRNA(Ser). Is also able to aminoacylate tRNA(Sec) with serine, to form the misacylated tRNA L-seryl-tRNA(Sec), which will be further converted into selenocysteinyl-tRNA(Sec). The protein is Serine--tRNA ligase of Synechococcus sp. (strain JA-2-3B'a(2-13)) (Cyanobacteria bacterium Yellowstone B-Prime).